The sequence spans 778 residues: Tastin (778 aa).

The segment covering Met1 to Leu11 has biased composition (basic and acidic residues). The interval Met1–Pro115 is disordered. A phosphoserine mark is found at Ser16, Ser98, and Ser170. The interval Ile212–Gln244 is disordered. The span at Ala235 to Gln244 shows a compositional bias: polar residues. Phosphoserine is present on residues Ser324, Ser334, Ser344, and Ser362. Thr363 carries the phosphothreonine modification. Ser376 bears the Phosphoserine mark. Disordered stretches follow at residues Glu406–Pro425, Glu508–Arg587, and Pro600–Leu641. Residues Gln513 to Pro523 show a composition bias toward pro residues. 4 repeat units span residues Pro516–Tyr548, Pro549–Cys581, Pro582–Cys614, and Pro615–Cys647. Positions Pro516–Cys647 are 4 X 33 AA approximate tandem repeats. Basic and acidic residues predominate over residues Cys560–Gln574. Positions Glu612–Leu622 are enriched in pro residues.

Directly binds bystin, and indirectly trophinin. As to expression, strong expression at implantation sites. Was exclusively localized to the apical side of the syncytiotrophoblast. Also found in macrophages.

It is found in the cytoplasm. Functionally, could be involved with bystin and trophinin in a cell adhesion molecule complex that mediates an initial attachment of the blastocyst to uterine epithelial cells at the time of the embryo implantation. In Homo sapiens (Human), this protein is Tastin (TROAP).